The chain runs to 602 residues: Leucine-rich repeat-containing protein 40 (602 aa).

Residues 1–26 (MSRHMRAPRFDPRAGFHAEGKDRGPS) form a disordered region. A compositionally biased stretch (basic and acidic residues) spans 8–24 (PRFDPRAGFHAEGKDRG). The stretch at 35 to 58 (ARSSGQLNLAGRNLGEVPQCVWRI) is one LRR 1 repeat. A Phosphoserine modification is found at Ser71. LRR repeat units follow at residues 81–103 (QTDL…DLRL), 104–126 (LPAL…AIRE), 127–149 (LDNL…EITS), 150–172 (LKNL…GFEH), 174–195 (SCLE…DFAL), 196–219 (LSSL…ISRM), 221–241 (RLKH…DVGS), 242–266 (MESL…SCRQ), 268–287 (KELH…HLQH), 288–310 (LQAI…EMAL), 311–334 (LQSL…LGNL), 336–356 (LKFL…IIAK), 398–421 (IATL…LFDA), 424–447 (TTLI…IVEL), 449–470 (EMVL…ELCL), 471–494 (LQKL…MSSL), 496–517 (KLQT…LYRI), 519–540 (TLEA…KMKL), 541–564 (MENL…LGNC), and 566–587 (QLRT…ILMK).

This Mus musculus (Mouse) protein is Leucine-rich repeat-containing protein 40 (Lrrc40).